A 721-amino-acid chain; its full sequence is BBSome complex member BBS2 (721 aa).

The stretch at 325–369 forms a coiled coil; that stretch reads RGNLMDTSAEQDLIRELSQKKQNLLLELRNYEENAKAELASPLNE.

In terms of assembly, part of BBSome complex, that contains BBS1, BBS2, BBS4, BBS5, BBS7, BBS8/TTC8, BBS9 and BBIP10. Interacts (via C-terminus) with BBS7. Interacts (via coiled coil domain) with MKKS. Interacts with CCDC28B and ALDOB. Interacts with DLEC1. As to expression, widely expressed.

The protein resides in the cell projection. It is found in the cilium membrane. The protein localises to the cytoplasm. Its subcellular location is the cytoskeleton. It localises to the microtubule organizing center. The protein resides in the centrosome. It is found in the centriolar satellite. The BBSome complex is thought to function as a coat complex required for sorting of specific membrane proteins to the primary cilia. The BBSome complex is required for ciliogenesis but is dispensable for centriolar satellite function. This ciliogenic function is mediated in part by the Rab8 GDP/GTP exchange factor, which localizes to the basal body and contacts the BBSome. Rab8(GTP) enters the primary cilium and promotes extension of the ciliary membrane. Firstly the BBSome associates with the ciliary membrane and binds to RAB3IP/Rabin8, the guanosyl exchange factor (GEF) for Rab8 and then the Rab8-GTP localizes to the cilium and promotes docking and fusion of carrier vesicles to the base of the ciliary membrane. The BBSome complex, together with the LTZL1, controls SMO ciliary trafficking and contributes to the sonic hedgehog (SHH) pathway regulation. Required for proper BBSome complex assembly and its ciliary localization. This is BBSome complex member BBS2 from Homo sapiens (Human).